Here is a 115-residue protein sequence, read N- to C-terminus: Large ribosomal subunit protein uL18 (115 aa).

Positions 1–24 are disordered; the sequence is MISKPDKNKLRQKRHTRVRGKISG. Residues 10–20 show a composition bias toward basic residues; it reads LRQKRHTRVRG.

The protein belongs to the universal ribosomal protein uL18 family. As to quaternary structure, part of the 50S ribosomal subunit; part of the 5S rRNA/L5/L18/L25 subcomplex. Contacts the 5S and 23S rRNAs.

In terms of biological role, this is one of the proteins that bind and probably mediate the attachment of the 5S RNA into the large ribosomal subunit, where it forms part of the central protuberance. This Lactococcus lactis subsp. cremoris (strain MG1363) protein is Large ribosomal subunit protein uL18.